We begin with the raw amino-acid sequence, 265 residues long: Glutamate racemase (265 aa).

Substrate-binding positions include 12–13 and 44–45; these read DS and YG. The active-site Proton donor/acceptor is Cys75. 76-77 lines the substrate pocket; it reads NT. Cys186 functions as the Proton donor/acceptor in the catalytic mechanism. Residue 187–188 participates in substrate binding; the sequence is TH.

The protein belongs to the aspartate/glutamate racemases family.

It catalyses the reaction L-glutamate = D-glutamate. The protein operates within cell wall biogenesis; peptidoglycan biosynthesis. Provides the (R)-glutamate required for cell wall biosynthesis. The protein is Glutamate racemase of Pseudomonas putida (strain W619).